The primary structure comprises 120 residues: Large ribosomal subunit protein bL17 (120 aa).

The protein belongs to the bacterial ribosomal protein bL17 family. In terms of assembly, part of the 50S ribosomal subunit. Contacts protein L32.

The polypeptide is Large ribosomal subunit protein bL17 (Geobacillus kaustophilus (strain HTA426)).